The following is a 361-amino-acid chain: Tryptophan--tRNA ligase, mitochondrial (361 aa).

The transit peptide at 1 to 16 (MAKLPKITSLLPHSRV) directs the protein to the mitochondrion. ATP contacts are provided by residues Gln-21 and 27 to 30 (HIGN). The 'HIGH' region signature appears at 22–30 (PTGIPHIGN). Asp-165 contacts L-tryptophan. ATP is bound by residues 177-179 (GKD), 225-229 (KMSKS), and Lys-228. The short motif at 225-229 (KMSKS) is the 'KMSKS' region element.

Belongs to the class-I aminoacyl-tRNA synthetase family. In terms of assembly, homodimer.

The protein resides in the mitochondrion matrix. The catalysed reaction is tRNA(Trp) + L-tryptophan + ATP = L-tryptophyl-tRNA(Trp) + AMP + diphosphate + H(+). This Schizosaccharomyces pombe (strain 972 / ATCC 24843) (Fission yeast) protein is Tryptophan--tRNA ligase, mitochondrial.